Reading from the N-terminus, the 568-residue chain is MAQVDSQDRWGEASPLSSLTEEAHDTQMLSMNLESDDEDGGEAEKEGTADPVACPRGSSPVTHENPDLPWPHPLGKEEEKFSDSSSAGGMGQKPVEMSGKASWSRDVTKINETQGSPGASRALGSLPSGLAHKLLGQMQPLGDRLPAGDDGYSGANQDAVLDVPPSFPSNGKYLCAHKSVDTSAGNSSLLCFPRPGSNWDLPTQETHTPAQASATPASLAAAVLAKARNSRKVQNQAGRREGGEAEARPYRCLRGGRAFQKPSKPLSPAETRGGAAKRYACELCGKAYSHRGTLQQHRRLHTGERPYQCSFCDKAYTWSSDHRKHIRTHTGEKPYPCPDCGKAFVRSSDLRKHQRNMHSNNKPFPCSECGLTFNKPLSLLRHQRTHLGAKPFRCPACDREFAVASRMVEHQRVHSGERPFPCPTCGKCFTKSSNLSEHQTLHTGQRPFKCADCGVAFAQPSRLVRHQRIHTGERPFPCTQCGQAFARSSTLKRHQQIHSGEKGFLCAECGRAFRIASELAQHIRMHNGERPYQCEDCGQAFTRSNHLQRHRAKHGTCKKEPIPSSSDE.

Over residues 1 to 11 (MAQVDSQDRWG) the composition is skewed to basic and acidic residues. The interval 1–106 (MAQVDSQDRW…MSGKASWSRD (106 aa)) is disordered. 10 C2H2-type zinc fingers span residues 279 to 301 (YACELCGKAYSHRGTLQQHRRLH), 307 to 329 (YQCSFCDKAYTWSSDHRKHIRTH), 335 to 358 (YPCPDCGKAFVRSSDLRKHQRNMH), 364 to 386 (FPCSECGLTFNKPLSLLRHQRTH), 392 to 414 (FRCPACDREFAVASRMVEHQRVH), 420 to 442 (FPCPTCGKCFTKSSNLSEHQTLH), 448 to 470 (FKCADCGVAFAQPSRLVRHQRIH), 476 to 498 (FPCTQCGQAFARSSTLKRHQQIH), 504 to 526 (FLCAECGRAFRIASELAQHIRMH), and 532 to 554 (YQCEDCGQAFTRSNHLQRHRAKH). Residues 548 to 568 (QRHRAKHGTCKKEPIPSSSDE) form a disordered region.

The protein belongs to the krueppel C2H2-type zinc-finger protein family.

The protein resides in the nucleus. Functionally, may be involved in transcriptional regulation. The polypeptide is Zinc finger protein 648 (ZNF648) (Homo sapiens (Human)).